An 888-amino-acid chain; its full sequence is MDHNVNAPLRDDVRLLGDLLGECLRQQAGDSIYETVEKIRQASVATRTEGGASLASLRDLLSPLDDATLLEVARAFSQFLNLSNIAEQHHRERLHRQHQRYPGDAGTDQGLQEVLQRLADNDIAKEQISGTLEQLSVELVLTAHPTEVTRRTLIRKYDQMADLLSELDRPDFNEDERELRRERLRRVILAAWCTDEIRREKPTPVDEAKWGFATIEQSLWQAVPDVLRQLEAQLADRGLPAPPSDWAPVKLASWMGGDRDGNPNVTAPVTREVLLLARWMAADLYLRDVENLLADLSMKSASEELLAATGPTHEPYRVLLREVRSRLRLTRRQMEAQVEGLPVPEGQAYLRREELMAPLQLLDRSLRAVGLSDIADGDLKNTLRRLNCFGITLLRLDIRQESTRHSDVLDAITRYLQLGRYSDWDEAARQAFLVDELQARRPLIDAAFRDSEHCTAEVAEVLATCEVIAEQGSEGLGAYVISMATTPSDVMAVMLLQKIAGVREPMRVVPLFETLDDLDGAEQTMSALLALPFYRERVAAGQEIMIGYSDSAKDAGFLGAAWAQYRAQEKLTALFADNGIPLTLFHGRGGSISRGGSPTRMALLSQPPGSVAGRIRVTEQGEVIRFKYGRPSVAVFNLEQYVAATLEATLLPPQAARPEWRQQMQALTDTSVAGYRGVVRDEPELVRYLRTVTPETELSRLALGSRPARRKSDQGISSLRAIPWVFAWTQIRLMLPAWLGTGAALEDAQNDAAQHAMVREMASEWPFFQGVVDMLEMVLAKSDLRVAAWYEERLAGDDPGLMRLGEVLRERLTATVSALSALTGREDLLDNNPVMRWSIRVRDPYTDPLHLLQAELMARLRQQDGDETLESALMVTIAGIAAGLRNTG.

Residues histidine 144 and lysine 553 contribute to the active site.

This sequence belongs to the PEPCase type 1 family. Mg(2+) is required as a cofactor.

The enzyme catalyses oxaloacetate + phosphate = phosphoenolpyruvate + hydrogencarbonate. Forms oxaloacetate, a four-carbon dicarboxylic acid source for the tricarboxylic acid cycle. The chain is Phosphoenolpyruvate carboxylase from Alcanivorax borkumensis (strain ATCC 700651 / DSM 11573 / NCIMB 13689 / SK2).